Reading from the N-terminus, the 379-residue chain is L-lactate dehydrogenase (379 aa).

The 379-residue stretch at 1–379 folds into the FMN hydroxy acid dehydrogenase domain; that stretch reads MIISSSTDYR…ISPDSLVRGL (379 aa). Position 24 (Tyr-24) interacts with substrate. FMN is bound by residues Ser-106 and Gln-127. Tyr-129 serves as a coordination point for substrate. Position 155 (Thr-155) interacts with FMN. Arg-164 serves as a coordination point for substrate. Lys-251 serves as a coordination point for FMN. The Proton acceptor role is filled by His-275. Residue Arg-278 participates in substrate binding. Residue 306–330 coordinates FMN; it reads DSGIRSGLDVVRMIAQGADGVLIGR.

This sequence belongs to the FMN-dependent alpha-hydroxy acid dehydrogenase family. FMN serves as cofactor.

It is found in the cell inner membrane. The catalysed reaction is (S)-lactate + A = pyruvate + AH2. In terms of biological role, catalyzes the conversion of L-lactate to pyruvate. Is coupled to the respiratory chain. This is L-lactate dehydrogenase from Allorhizobium ampelinum (strain ATCC BAA-846 / DSM 112012 / S4) (Agrobacterium vitis (strain S4)).